The sequence spans 351 residues: Flap endonuclease 1 (351 aa).

Residues methionine 1–lysine 98 form an N-domain region. Positions 27, 80, 154, 156, 175, 177, and 238 each coordinate Mg(2+). The tract at residues glutamate 118 to glycine 260 is I-domain. The tract at residues arginine 343–phenylalanine 351 is interaction with PCNA.

The protein belongs to the XPG/RAD2 endonuclease family. FEN1 subfamily. In terms of assembly, interacts with PCNA. PCNA stimulates the nuclease activity without altering cleavage specificity. Requires Mg(2+) as cofactor.

Its function is as follows. Structure-specific nuclease with 5'-flap endonuclease and 5'-3' exonuclease activities involved in DNA replication and repair. During DNA replication, cleaves the 5'-overhanging flap structure that is generated by displacement synthesis when DNA polymerase encounters the 5'-end of a downstream Okazaki fragment. Binds the unpaired 3'-DNA end and kinks the DNA to facilitate 5' cleavage specificity. Cleaves one nucleotide into the double-stranded DNA from the junction in flap DNA, leaving a nick for ligation. Also involved in the base excision repair (BER) pathway. Acts as a genome stabilization factor that prevents flaps from equilibrating into structures that lead to duplications and deletions. Also possesses 5'-3' exonuclease activity on nicked or gapped double-stranded DNA. The sequence is that of Flap endonuclease 1 from Sulfurisphaera tokodaii (strain DSM 16993 / JCM 10545 / NBRC 100140 / 7) (Sulfolobus tokodaii).